A 504-amino-acid polypeptide reads, in one-letter code: Ribonuclease Y (504 aa).

The region spanning 194–279 (TVHVVSLPND…EMVEKAKQEV (86 aa)) is the KH domain. One can recognise an HD domain in the interval 320 to 413 (VLKHSMEVAY…VQAADAISAA (94 aa)).

Belongs to the RNase Y family.

Functionally, endoribonuclease that initiates mRNA decay. The sequence is that of Ribonuclease Y from Clostridium novyi (strain NT).